A 72-amino-acid polypeptide reads, in one-letter code: UPF0270 protein plu0398 (72 aa).

Belongs to the UPF0270 family.

The sequence is that of UPF0270 protein plu0398 from Photorhabdus laumondii subsp. laumondii (strain DSM 15139 / CIP 105565 / TT01) (Photorhabdus luminescens subsp. laumondii).